The primary structure comprises 269 residues: Ribosomal RNA small subunit methyltransferase A (269 aa).

S-adenosyl-L-methionine-binding residues include N18, L20, G45, E66, D91, and N112.

Belongs to the class I-like SAM-binding methyltransferase superfamily. rRNA adenine N(6)-methyltransferase family. RsmA subfamily.

The protein localises to the cytoplasm. The enzyme catalyses adenosine(1518)/adenosine(1519) in 16S rRNA + 4 S-adenosyl-L-methionine = N(6)-dimethyladenosine(1518)/N(6)-dimethyladenosine(1519) in 16S rRNA + 4 S-adenosyl-L-homocysteine + 4 H(+). Functionally, specifically dimethylates two adjacent adenosines (A1518 and A1519) in the loop of a conserved hairpin near the 3'-end of 16S rRNA in the 30S particle. May play a critical role in biogenesis of 30S subunits. The polypeptide is Ribosomal RNA small subunit methyltransferase A (Shewanella loihica (strain ATCC BAA-1088 / PV-4)).